The following is a 361-amino-acid chain: Phospho-N-acetylmuramoyl-pentapeptide-transferase (361 aa).

10 helical membrane-spanning segments follow: residues 27 to 47 (GAIV…ISTL), 72 to 92 (TPTM…LLWA), 94 to 114 (LSNL…LIGF), 133 to 153 (ARLA…INAG), 169 to 189 (LLLD…VAAG), 200 to 220 (GLAI…SYLS), 237 to 257 (VGEL…FLWF), 264 to 284 (IFMG…IAVA), 289 to 309 (IVLA…IVQV), and 338 to 358 (QVVI…LATL).

It belongs to the glycosyltransferase 4 family. MraY subfamily. Requires Mg(2+) as cofactor.

Its subcellular location is the cell inner membrane. It carries out the reaction UDP-N-acetyl-alpha-D-muramoyl-L-alanyl-gamma-D-glutamyl-meso-2,6-diaminopimeloyl-D-alanyl-D-alanine + di-trans,octa-cis-undecaprenyl phosphate = di-trans,octa-cis-undecaprenyl diphospho-N-acetyl-alpha-D-muramoyl-L-alanyl-D-glutamyl-meso-2,6-diaminopimeloyl-D-alanyl-D-alanine + UMP. The protein operates within cell wall biogenesis; peptidoglycan biosynthesis. Functionally, catalyzes the initial step of the lipid cycle reactions in the biosynthesis of the cell wall peptidoglycan: transfers peptidoglycan precursor phospho-MurNAc-pentapeptide from UDP-MurNAc-pentapeptide onto the lipid carrier undecaprenyl phosphate, yielding undecaprenyl-pyrophosphoryl-MurNAc-pentapeptide, known as lipid I. The polypeptide is Phospho-N-acetylmuramoyl-pentapeptide-transferase (Azorhizobium caulinodans (strain ATCC 43989 / DSM 5975 / JCM 20966 / LMG 6465 / NBRC 14845 / NCIMB 13405 / ORS 571)).